An 89-amino-acid chain; its full sequence is Small ribosomal subunit protein uS15 (89 aa).

The protein belongs to the universal ribosomal protein uS15 family. Part of the 30S ribosomal subunit. Forms a bridge to the 50S subunit in the 70S ribosome, contacting the 23S rRNA.

In terms of biological role, one of the primary rRNA binding proteins, it binds directly to 16S rRNA where it helps nucleate assembly of the platform of the 30S subunit by binding and bridging several RNA helices of the 16S rRNA. Its function is as follows. Forms an intersubunit bridge (bridge B4) with the 23S rRNA of the 50S subunit in the ribosome. This Cyanothece sp. (strain PCC 7425 / ATCC 29141) protein is Small ribosomal subunit protein uS15.